Here is a 165-residue protein sequence, read N- to C-terminus: Shikimate kinase (165 aa).

11-16 (GAGKTT) lines the ATP pocket. Thr-15 is a Mg(2+) binding site. 3 residues coordinate substrate: Asp-33, Arg-57, and Gly-78. An ATP-binding site is contributed by Arg-116. Residue Arg-134 coordinates substrate.

It belongs to the shikimate kinase family. In terms of assembly, monomer. It depends on Mg(2+) as a cofactor.

It is found in the cytoplasm. The enzyme catalyses shikimate + ATP = 3-phosphoshikimate + ADP + H(+). It functions in the pathway metabolic intermediate biosynthesis; chorismate biosynthesis; chorismate from D-erythrose 4-phosphate and phosphoenolpyruvate: step 5/7. In terms of biological role, catalyzes the specific phosphorylation of the 3-hydroxyl group of shikimic acid using ATP as a cosubstrate. The sequence is that of Shikimate kinase from Bacillus anthracis (strain A0248).